A 356-amino-acid polypeptide reads, in one-letter code: Butyrate kinase 2 (356 aa).

The protein belongs to the acetokinase family. As to quaternary structure, homodimer.

The protein resides in the cytoplasm. It carries out the reaction butanoate + ATP = butanoyl phosphate + ADP. It participates in lipid metabolism; butanoate metabolism. Its function is as follows. Catalyzes the conversion of butyryl-CoA through butyryl phosphate to butyrate. The chain is Butyrate kinase 2 (buk2) from Clostridium acetobutylicum (strain ATCC 824 / DSM 792 / JCM 1419 / IAM 19013 / LMG 5710 / NBRC 13948 / NRRL B-527 / VKM B-1787 / 2291 / W).